Here is a 256-residue protein sequence, read N- to C-terminus: Imidazole glycerol phosphate synthase subunit HisF (256 aa).

Residues D11 and D130 contribute to the active site.

This sequence belongs to the HisA/HisF family. In terms of assembly, heterodimer of HisH and HisF.

It localises to the cytoplasm. The catalysed reaction is 5-[(5-phospho-1-deoxy-D-ribulos-1-ylimino)methylamino]-1-(5-phospho-beta-D-ribosyl)imidazole-4-carboxamide + L-glutamine = D-erythro-1-(imidazol-4-yl)glycerol 3-phosphate + 5-amino-1-(5-phospho-beta-D-ribosyl)imidazole-4-carboxamide + L-glutamate + H(+). Its pathway is amino-acid biosynthesis; L-histidine biosynthesis; L-histidine from 5-phospho-alpha-D-ribose 1-diphosphate: step 5/9. Functionally, IGPS catalyzes the conversion of PRFAR and glutamine to IGP, AICAR and glutamate. The HisF subunit catalyzes the cyclization activity that produces IGP and AICAR from PRFAR using the ammonia provided by the HisH subunit. The chain is Imidazole glycerol phosphate synthase subunit HisF from Prochlorococcus marinus (strain MIT 9301).